A 160-amino-acid chain; its full sequence is Cyclic pyranopterin monophosphate synthase (160 aa).

Substrate is bound by residues 74–76 and 112–113; these read LSH and ME. The active site involves D127.

Belongs to the MoaC family. As to quaternary structure, homohexamer; trimer of dimers.

It catalyses the reaction (8S)-3',8-cyclo-7,8-dihydroguanosine 5'-triphosphate = cyclic pyranopterin phosphate + diphosphate. Its pathway is cofactor biosynthesis; molybdopterin biosynthesis. Catalyzes the conversion of (8S)-3',8-cyclo-7,8-dihydroguanosine 5'-triphosphate to cyclic pyranopterin monophosphate (cPMP). This chain is Cyclic pyranopterin monophosphate synthase, found in Geotalea uraniireducens (strain Rf4) (Geobacter uraniireducens).